Reading from the N-terminus, the 505-residue chain is Argininosuccinate lyase (505 aa).

It belongs to the lyase 1 family. Argininosuccinate lyase subfamily.

It localises to the cytoplasm. The enzyme catalyses 2-(N(omega)-L-arginino)succinate = fumarate + L-arginine. It functions in the pathway amino-acid biosynthesis; L-arginine biosynthesis; L-arginine from L-ornithine and carbamoyl phosphate: step 3/3. The chain is Argininosuccinate lyase from Rhodococcoides fascians (Rhodococcus fascians).